A 72-amino-acid polypeptide reads, in one-letter code: Light-harvesting polypeptide B-885 alpha-1 chain (72 aa).

Topologically, residues 1–16 (SAPAQWKLWLVMDPRT) are cytoplasmic. The helical transmembrane segment at 17-37 (VMIGTAAWLGVLALLIHFLLL) threads the bilayer. Position 33 (His33) interacts with a bacteriochlorophyll. Topologically, residues 38–72 (GTERFNWIDTGLKEQKATAAAQAAITPAPVTAAAK) are periplasmic.

Belongs to the antenna complex alpha subunit family. The core complex is formed by different alpha and beta chains, binding bacteriochlorophyll molecules, and arranged most probably in tetrameric structures disposed around the reaction center. The non-pigmented gamma chains may constitute additional components.

It localises to the cell inner membrane. Antenna complexes are light-harvesting systems, which transfer the excitation energy to the reaction centers. The polypeptide is Light-harvesting polypeptide B-885 alpha-1 chain (Rhodocyclus tenuis (Rhodospirillum tenue)).